The following is a 400-amino-acid chain: Enoyl-[acyl-carrier-protein] reductase [NADH] 2 (400 aa).

Residues 48-53, 75-76, 112-113, and 141-142 contribute to the NAD(+) site; these read GASSGF, FE, DA, and LA. Tyrosine 228 is a binding site for substrate. The active-site Proton donor is tyrosine 238. NAD(+) contacts are provided by residues lysine 247 and 276–278; that span reads LVT.

This sequence belongs to the TER reductase family. Monomer.

It catalyses the reaction a 2,3-saturated acyl-[ACP] + NAD(+) = a (2E)-enoyl-[ACP] + NADH + H(+). It functions in the pathway lipid metabolism; fatty acid biosynthesis. In terms of biological role, involved in the final reduction of the elongation cycle of fatty acid synthesis (FAS II). Catalyzes the reduction of a carbon-carbon double bond in an enoyl moiety that is covalently linked to an acyl carrier protein (ACP). The polypeptide is Enoyl-[acyl-carrier-protein] reductase [NADH] 2 (Vibrio vulnificus (strain CMCP6)).